Here is a 289-residue protein sequence, read N- to C-terminus: Diaminopimelate epimerase (289 aa).

Residues N17, Q47, and N67 each contribute to the substrate site. The active-site Proton donor is the C76. Residues G77–N78, N164, N198, and E216–R217 contribute to the substrate site. Residue C225 is the Proton acceptor of the active site. Residue G226 to S227 coordinates substrate.

It belongs to the diaminopimelate epimerase family. Homodimer.

The protein localises to the cytoplasm. The catalysed reaction is (2S,6S)-2,6-diaminopimelate = meso-2,6-diaminopimelate. It functions in the pathway amino-acid biosynthesis; L-lysine biosynthesis via DAP pathway; DL-2,6-diaminopimelate from LL-2,6-diaminopimelate: step 1/1. In terms of biological role, catalyzes the stereoinversion of LL-2,6-diaminopimelate (L,L-DAP) to meso-diaminopimelate (meso-DAP), a precursor of L-lysine and an essential component of the bacterial peptidoglycan. This chain is Diaminopimelate epimerase, found in Bradyrhizobium sp. (strain ORS 278).